Here is a 2845-residue protein sequence, read N- to C-terminus: Multiple epidermal growth factor-like domains protein 8 (2845 aa).

A signal peptide spans 1–27 (MALGKVLAMALVLALAVLGSLSPGARA). Over 28 to 2647 (GDCKGQRQVL…FFRQDQAHID (2620 aa)) the chain is Extracellular. Intrachain disulfides connect Cys-30/Cys-57, Cys-142/Cys-152, Cys-146/Cys-158, Cys-174/Cys-184, Cys-178/Cys-191, and Cys-193/Cys-202. In terms of domain architecture, CUB 1 spans 30 to 140 (CKGQRQVLRE…LGFNASFRFS (111 aa)). N-linked (GlcNAc...) asparagine glycosylation occurs at Asn-50. 2 consecutive EGF-like domains span residues 138-168 (RFSLCPGGCQSHGQCQPPGVCACEPGWGGPD) and 170-203 (GLQECSAYCGSHGTCASPLGPCRCEPGFLGRACD). The N-linked (GlcNAc...) asparagine glycan is linked to Asn-217. Kelch repeat units follow at residues 241–287 (LLAV…AVAW), 290–338 (SLVL…AGHA), 346–399 (WLYV…FHAP), 402–453 (ALLV…FHTA), 459–511 (YMVV…APPS), and 525–575 (VLLV…SRDP). PSI domains are found at residues 561–613 (YCSM…GDCQ), 847–899 (SCTS…TLCP), and 900–947 (LCEE…EECP). N-linked (GlcNAc...) asparagine glycosylation is present at Asn-1048. The EGF-like 3; calcium-binding domain maps to 1074–1115 (DVDECRLGLARCHPRATCLNTPLSYECHCQRGYQGDGISHCN). 16 disulfides stabilise this stretch: Cys-1078–Cys-1091, Cys-1085–Cys-1100, Cys-1102–Cys-1114, Cys-1163–Cys-1171, Cys-1165–Cys-1179, Cys-1182–Cys-1191, Cys-1194–Cys-1208, Cys-1211–Cys-1224, Cys-1213–Cys-1231, Cys-1233–Cys-1242, Cys-1245–Cys-1259, Cys-1263–Cys-1302, Cys-1336–Cys-1367, Cys-1407–Cys-1421, Cys-1415–Cys-1433, and Cys-1435–Cys-1444. Laminin EGF-like domains lie at 1163–1210 (CGCS…GCRP) and 1211–1261 (CQCN…SCFR). Residues 1263–1405 (CGGRALLTNV…WGFNASVGSA (143 aa)) enclose the CUB 2 domain. Asn-1271 carries N-linked (GlcNAc...) asparagine glycosylation. At Thr-1353 the chain carries Phosphothreonine. Residues 1403 to 1445 (GSARCGSGGPGSCPVPQECVPQDGAAGAGLCRCPQGWAGPHCR) enclose the EGF-like 4 domain. Kelch repeat units follow at residues 1522–1570 (TLWM…SFHA), 1580–1626 (AMYL…HTLT), 1632–1679 (SLLL…SAVY), 1685–1735 (SLYV…VRGS), 1796–1843 (TMVV…ESVA), and 1852–1898 (RLYI…CHGA). The disordered stretch occupies residues 1726–1745 (RDRMRNVRGSSRGLGQVPGE). PSI domains lie at 1876 to 1916 (PCRL…SPCS), 1924 to 1979 (ECRR…NDCR), 2060 to 2118 (PCHL…ESCS), and 2120 to 2177 (GCAQ…LSCP). An N-linked (GlcNAc...) asparagine glycan is attached at Asn-2066. The 39-residue stretch at 2178–2216 (PEDECANGHHDCNETQNCHDQPHGYECSCKTGYTMDNMT) folds into the EGF-like 5 domain. Cystine bridges form between Cys-2182–Cys-2195 and Cys-2189–Cys-2204. A glycan (N-linked (GlcNAc...) asparagine) is linked at Asn-2229. 8 cysteine pairs are disulfide-bonded: Cys-2253–Cys-2261, Cys-2255–Cys-2270, Cys-2273–Cys-2282, Cys-2285–Cys-2299, Cys-2380–Cys-2389, Cys-2382–Cys-2397, Cys-2399–Cys-2424, and Cys-2427–Cys-2441. 2 consecutive Laminin EGF-like domains span residues 2253–2301 (CRCN…TCRP) and 2380–2443 (CQCN…QCYR). Residues 2523 to 2564 (TVHIQPPPAPPPPPPPADGGPRGAGDPGGAGASSGPGAPAEP) are disordered. Over residues 2527 to 2540 (QPPPAPPPPPPPAD) the composition is skewed to pro residues. Residues 2542 to 2556 (GPRGAGDPGGAGASS) show a composition bias toward gly residues. Residues 2648–2668 (LFVFFSVFFSCFFLFLSLCVL) traverse the membrane as a helical segment. At 2669–2845 (LWKAKQALDQ…SQDNLTSMSL (177 aa)) the chain is on the cytoplasmic side. The segment covering 2817–2831 (GGGAGGSGHGTGAGR) has biased composition (gly residues). Residues 2817–2845 (GGGAGGSGHGTGAGRKGLLSQDNLTSMSL) form a disordered region. Residues 2836 to 2845 (SQDNLTSMSL) are compositionally biased toward polar residues.

Its subcellular location is the membrane. In terms of biological role, acts as a negative regulator of hedgehog signaling. In Homo sapiens (Human), this protein is Multiple epidermal growth factor-like domains protein 8 (MEGF8).